Here is a 352-residue protein sequence, read N- to C-terminus: Adenosine deaminase (352 aa).

Ala2 is modified (N-acetylalanine). Residues His15 and His17 each contribute to the Zn(2+) site. The substrate site is built by His17 and Asp19. Position 54 is an N6-acetyllysine (Lys54). Gly184 is a binding site for substrate. Position 214 (His214) interacts with Zn(2+). The Proton donor role is filled by Glu217. N6-acetyllysine is present on Lys232. A Zn(2+)-binding site is contributed by Asp295. Asp296 is a binding site for substrate.

Belongs to the metallo-dependent hydrolases superfamily. Adenosine and AMP deaminases family. In terms of assembly, interacts with DPP4 (via extracellular domain). Interacts with PLG (via Kringle 4 domain); the interaction stimulates PLG activation when in complex with DPP4. Zn(2+) serves as cofactor. Detected in brain neurons in the median emninence (at protein level). Expressed in secondary deciduum (at protein level). Found in all tissues, occurs in large amounts in T-lymphocytes and, at the time of weaning, in gastrointestinal tissues.

The protein resides in the cell membrane. The protein localises to the cell junction. Its subcellular location is the cytoplasmic vesicle lumen. It localises to the cytoplasm. It is found in the lysosome. The catalysed reaction is adenosine + H2O + H(+) = inosine + NH4(+). The enzyme catalyses 2'-deoxyadenosine + H2O + H(+) = 2'-deoxyinosine + NH4(+). It catalyses the reaction cordycepin + H2O + H(+) = 3'-deoxyinosine + NH4(+). In terms of biological role, catalyzes the hydrolytic deamination of adenosine and 2-deoxyadenosine. Plays an important role in purine metabolism and in adenosine homeostasis. Modulates signaling by extracellular adenosine, and so contributes indirectly to cellular signaling events. Acts as a positive regulator of T-cell coactivation, by binding DPP4. Its interaction with DPP4 regulates lymphocyte-epithelial cell adhesion. Enhances dendritic cell immunogenicity by affecting dendritic cell costimulatory molecule expression and cytokines and chemokines secretion. Enhances CD4+ T-cell differentiation and proliferation. Acts as a positive modulator of adenosine receptors ADORA1 and ADORA2A, by enhancing their ligand affinity via conformational change. Stimulates plasminogen activation. Plays a role in male fertility. Plays a protective role in early postimplantation embryonic development. Also responsible for the deamination of cordycepin (3'-deoxyadenosine), a fungal natural product that shows antitumor, antibacterial, antifungal, antivirus, and immune regulation properties. The chain is Adenosine deaminase (Ada) from Mus musculus (Mouse).